Consider the following 293-residue polypeptide: Phosphatidylglycerol--prolipoprotein diacylglyceryl transferase (293 aa).

The next 4 helical transmembrane spans lie at 45-65 (FELR…YFVA), 81-101 (ELIF…YVLF), 115-135 (IWEG…TGFL), and 144-164 (FTFL…QAIG). Residue arginine 165 coordinates a 1,2-diacyl-sn-glycero-3-phospho-(1'-sn-glycerol). 3 helical membrane passes run 204–224 (PTFL…SVYF), 231–249 (HGEV…RIVI), and 262–282 (IKAA…GFLI).

Belongs to the Lgt family.

It is found in the cell inner membrane. The catalysed reaction is L-cysteinyl-[prolipoprotein] + a 1,2-diacyl-sn-glycero-3-phospho-(1'-sn-glycerol) = an S-1,2-diacyl-sn-glyceryl-L-cysteinyl-[prolipoprotein] + sn-glycerol 1-phosphate + H(+). The protein operates within protein modification; lipoprotein biosynthesis (diacylglyceryl transfer). Its function is as follows. Catalyzes the transfer of the diacylglyceryl group from phosphatidylglycerol to the sulfhydryl group of the N-terminal cysteine of a prolipoprotein, the first step in the formation of mature lipoproteins. The chain is Phosphatidylglycerol--prolipoprotein diacylglyceryl transferase from Thermotoga maritima (strain ATCC 43589 / DSM 3109 / JCM 10099 / NBRC 100826 / MSB8).